We begin with the raw amino-acid sequence, 503 residues long: Maturase K (503 aa).

It belongs to the intron maturase 2 family. MatK subfamily.

It is found in the plastid. Its subcellular location is the chloroplast. Usually encoded in the trnK tRNA gene intron. Probably assists in splicing its own and other chloroplast group II introns. The sequence is that of Maturase K from Actinodium cunninghamii (Albany daisy).